Consider the following 778-residue polypeptide: Protein PHOTOPERIODIC CONTROL OF HYPOCOTYL 1 (778 aa).

Disordered stretches follow at residues 74 to 95 (QKRETTTTTTTKPSFHEDVGSS), 186 to 283 (HNRG…NSAT), and 316 to 335 (KTSPSDSSETKSMMKMKEAS). Residues 198-212 (SSKDTQEDGPRKNES) are compositionally biased toward basic and acidic residues. The segment covering 230-247 (SGSISSSSTKGKGIKGYS) has biased composition (low complexity). Positions 265–275 (PDRENSVDGHQ) are enriched in basic and acidic residues. A compositionally biased stretch (polar residues) spans 317–326 (TSPSDSSETK). The F-box domain maps to 470-505 (WPLLPNDLLELIMGHLETSFEIFLFRSVCSSWRSVV).

As to quaternary structure, interacts with light-activated phyB. Binds directly to PIF1 and COP1. In terms of processing, ubiquitinated by COP1 in darkness; this leads to proteasomal degradation. In terms of tissue distribution, mainly expressed in cotyledons, hypocotyls, leaves and roots.

The protein resides in the nucleus. Together with PCHL, regulates growth and development adaptation to the ambient environment by controlling negatively phytochrome B (phyB) dark reversion, a temperature-dependent thermal relaxation process during which phyB reverts from the active to the inactive state. Contributes to red (R) light-triggered photomorphogenesis. Promotes various light responses such as seed germination, hypocotyl gravitropism and chlorophyll biosynthesis, via direct interaction with PIF1 and COP1. Prevents DNA-binding ability of PIF1 to negatively regulate the expressions of its target genes. Facilitates the physical interaction between phyB and PIF1 and the subsequent light-induced degradation of PIF1. In Arabidopsis thaliana (Mouse-ear cress), this protein is Protein PHOTOPERIODIC CONTROL OF HYPOCOTYL 1.